The following is a 115-amino-acid chain: T cell receptor delta variable 2 (115 aa).

The signal sequence occupies residues 1 to 19 (MQRISSLIHLSLFWAGVMS). The 91-residue stretch at 25-115 (PEHQTVPVSI…EGSYYCACDT (91 aa)) folds into the Ig-like domain. A disulfide bond links cysteine 42 and cysteine 111.

Gamma-delta TR is a heterodimer composed of a gamma and delta chain; disulfide-linked. The gamma-delta TR is associated with the transmembrane signaling CD3 coreceptor proteins following the stoichiometry: a single gamma-delta TR heterodimer associates with one CD3D-CD3E heterodimer, one CD3G-CD3E heterodimer and one CD247 homodimer forming a stable octameric structure. Upon activation, gamma-delta TR complex associates with FCER1G to initiate intracellular signaling.

It localises to the cell membrane. V region of the variable domain of T cell receptor (TR) delta chain that participates in the antigen recognition. Gamma-delta TRs recognize a variety of self and foreign non-peptide antigens frequently expressed at the epithelial boundaries between the host and external environment, including endogenous lipids presented by MH-like protein CD1D and phosphoantigens presented by butyrophilin-like molecule BTN3A1. Upon antigen recognition induces rapid, innate-like immune responses involved in pathogen clearance and tissue repair. Binding of gamma-delta TR complex to antigen triggers phosphorylation of immunoreceptor tyrosine-based activation motifs (ITAMs) in the CD3 chains by the LCK and FYN kinases, allowing the recruitment, phosphorylation, and activation of ZAP70 that facilitates phosphorylation of the scaffolding proteins LCP2 and LAT. This lead to the formation of a supramolecular signalosome that recruits the phospholipase PLCG1, resulting in calcium mobilization and ERK activation, ultimately leading to T cell expansion and differentiation into effector cells. Gamma-delta TRs are produced through somatic rearrangement of a limited repertoire of variable (V), diversity (D), and joining (J) genes. The potential diversity of gamma-delta TRs is conferred by the unique ability to rearrange (D) genes in tandem and to utilize all three reading frames. The combinatorial diversity is considerably increased by the sequence exonuclease trimming and random nucleotide (N) region additions which occur during the V-(D)-J rearrangements. The chain is T cell receptor delta variable 2 from Homo sapiens (Human).